Consider the following 494-residue polypeptide: Glutamate decarboxylase 2 (494 aa).

Residue Lys-276 is modified to N6-(pyridoxal phosphate)lysine. The segment at 463–494 is calmodulin-binding; sequence VKEKKMEKEILMEVIVGWRKFVKERKKMNGVC.

It belongs to the group II decarboxylase family. In terms of assembly, homohexamer. Interacts with calmodulin. The cofactor is pyridoxal 5'-phosphate. In terms of tissue distribution, expressed in roots, inflorescence stems, flowers, siliques and leaves.

It catalyses the reaction L-glutamate + H(+) = 4-aminobutanoate + CO2. With respect to regulation, up-regulated by calmodulin binding at physiological pH. Its function is as follows. Catalyzes the conversion of glutamate to 4-aminobutanoate (GABA). The calmodulin-binding is calcium-dependent and it is proposed to directly or indirectly form a calcium regulated control of GABA biosynthesis. The polypeptide is Glutamate decarboxylase 2 (GAD2) (Arabidopsis thaliana (Mouse-ear cress)).